The chain runs to 81 residues: Large ribosomal subunit protein bL31B (81 aa).

This sequence belongs to the bacterial ribosomal protein bL31 family. Type B subfamily. In terms of assembly, part of the 50S ribosomal subunit.

The protein is Large ribosomal subunit protein bL31B of Borreliella afzelii (strain PKo) (Borrelia afzelii).